The following is a 176-amino-acid chain: Small ribosomal subunit protein uS5 (176 aa).

Positions 11 to 74 constitute an S5 DRBM domain; it reads LSEVLVDVNR…QAAKKRMMKV (64 aa).

This sequence belongs to the universal ribosomal protein uS5 family. As to quaternary structure, part of the 30S ribosomal subunit. Contacts proteins S4 and S8.

In terms of biological role, with S4 and S12 plays an important role in translational accuracy. Functionally, located at the back of the 30S subunit body where it stabilizes the conformation of the head with respect to the body. This is Small ribosomal subunit protein uS5 from Rickettsia akari (strain Hartford).